The chain runs to 202 residues: Peptide deformylase (202 aa).

The tract at residues 1 to 24 (MAGSFAQLAKNAEKKKPSISVSKE) is disordered. Cys-121 and His-163 together coordinate Fe cation. Glu-164 is an active-site residue. His-167 is a binding site for Fe cation.

Belongs to the polypeptide deformylase family. The cofactor is Fe(2+).

The catalysed reaction is N-terminal N-formyl-L-methionyl-[peptide] + H2O = N-terminal L-methionyl-[peptide] + formate. Its function is as follows. Removes the formyl group from the N-terminal Met of newly synthesized proteins. Requires at least a dipeptide for an efficient rate of reaction. N-terminal L-methionine is a prerequisite for activity but the enzyme has broad specificity at other positions. The sequence is that of Peptide deformylase from Prochlorococcus marinus (strain NATL2A).